The chain runs to 52 residues: U-scutigerotoxin(01)-Tl1a (52 aa).

A signal peptide spans 1–25 (MLAKAMSLLMMFLLVLVIGSVMVSA).

It belongs to the scutigerotoxin-01 family. Contains 1 disulfide bond. As to expression, expressed by the venom gland.

Its subcellular location is the secreted. The protein is U-scutigerotoxin(01)-Tl1a of Thereuopoda longicornis (Long-legged centipede).